We begin with the raw amino-acid sequence, 113 residues long: Propane 2-monooxygenase, effector component (113 aa).

It belongs to the TmoD/XamoD family. In terms of assembly, the propane 2-monooxygenase multicomponent enzyme system is composed of an electron transfer component and a monooxygenase component interacting with the effector protein PrmD. The electron transfer component is composed of a reductase (PrmB), and the monooxygenase component is formed by a large subunit (PrmA) and a small subunit (PrmC).

Functionally, effector component of the propane 2-monooxygenase multicomponent enzyme system which is involved in the degradation of propane via the O2-dependent hydroxylation of propane. This Rhodococcus jostii (strain RHA1) protein is Propane 2-monooxygenase, effector component.